The following is a 173-amino-acid chain: T-cell receptor beta-2 chain C region (173 aa).

The tract at residues 1–146 (EDLRNVTPPK…GVLSATILYE (146 aa)) is c region. N67 and N116 each carry an N-linked (GlcNAc...) asparagine glycan. A helical transmembrane segment spans residues 147–168 (ILLGKATLYAVLVSGLVLMAMV). At 169-173 (KKKNS) the chain is on the cytoplasmic side.

The protein localises to the membrane. This chain is T-cell receptor beta-2 chain C region, found in Mus musculus (Mouse).